The following is a 122-amino-acid chain: NADH-quinone oxidoreductase subunit A (122 aa).

A run of 3 helical transmembrane segments spans residues M10–G30, I66–V86, and L91–A111.

It belongs to the complex I subunit 3 family. As to quaternary structure, NDH-1 is composed of 14 different subunits. Subunits NuoA, H, J, K, L, M, N constitute the membrane sector of the complex.

It localises to the cell membrane. The enzyme catalyses a quinone + NADH + 5 H(+)(in) = a quinol + NAD(+) + 4 H(+)(out). NDH-1 shuttles electrons from NADH, via FMN and iron-sulfur (Fe-S) centers, to quinones in the respiratory chain. The immediate electron acceptor for the enzyme in this species is believed to be a menaquinone. Couples the redox reaction to proton translocation (for every two electrons transferred, four hydrogen ions are translocated across the cytoplasmic membrane), and thus conserves the redox energy in a proton gradient. This is NADH-quinone oxidoreductase subunit A from Bacillus anthracis.